The chain runs to 299 residues: GTPase Era (299 aa).

In terms of domain architecture, Era-type G spans 5 to 175; sequence RSGFVCLVGR…IDVLAAALPP (171 aa). The tract at residues 13-20 is G1; that stretch reads GRPNTGKS. Residue 13–20 participates in GTP binding; the sequence is GRPNTGKS. The G2 stretch occupies residues 39–43; sequence QTTRH. Residues 60 to 63 are G3; the sequence is DTPG. GTP contacts are provided by residues 60-64 and 124-127; these read DTPGL and TKID. Positions 124 to 127 are G4; sequence TKID. The interval 154–156 is G5; it reads VSA. The 80-residue stretch at 206–285 folds into the KH type-2 domain; that stretch reads VRDELPHSLA…YLDLRVKVAK (80 aa).

Belongs to the TRAFAC class TrmE-Era-EngA-EngB-Septin-like GTPase superfamily. Era GTPase family. Monomer.

It is found in the cell envelope. The protein resides in the secreted. Its subcellular location is the cell wall. In terms of biological role, exhibits GTPase activity. Binds RNA but is probably not involved in ribosome assembly in mycobacteria. In Mycobacterium avium (strain 104), this protein is GTPase Era.